We begin with the raw amino-acid sequence, 611 residues long: Zinc metalloproteinase-disintegrin-like ohanin (611 aa).

The N-terminal stretch at 1 to 20 (MIQVLLVTICLVVFPYQGSS) is a signal peptide. A propeptide spanning residues 21 to 187 (IILESGKVND…WESDEPIEKI (167 aa)) is cleaved from the precursor. The Peptidase M12B domain maps to 198 to 393 (KYLELYIVAD…DTPQCLINKP (196 aa)). N-linked (GlcNAc...) asparagine glycans are attached at residues N217 and N260. Disulfide bonds link C307–C388, C347–C372, and C349–C354. Residue H332 coordinates Zn(2+). The active site involves E333. H336 and H342 together coordinate Zn(2+). An N-linked (GlcNAc...) asparagine glycan is attached at N395. The 87-residue stretch at 401–487 (NAVCGNYVEE…ECPMDRFHKN (87 aa)) folds into the Disintegrin domain. 14 disulfides stabilise this stretch: C404–C433, C415–C428, C417–C423, C427–C450, C441–C447, C446–C472, C459–C479, C466–C498, C491–C503, C510–C560, C525–C578, C538–C548, C555–C603, and C597–C608. The D/ECD-tripeptide signature appears at 465–467 (ECD). N528 carries an N-linked (GlcNAc...) asparagine glycan.

Belongs to the venom metalloproteinase (M12B) family. P-III subfamily. P-IIIa sub-subfamily. Monomer. The cofactor is Zn(2+). In terms of tissue distribution, expressed by the venom gland.

The protein localises to the secreted. Its activity is regulated as follows. Inhibited by EDTA, but not by PMSF. Functionally, snake venom zinc metalloproteinase that has hemorrhagic activity. Inhibits ADP-, TMVA- and stejnulxin-induced platelet aggregation in a dose-dependent manner (on washed platelet, but not on platelet rich plasm). Also specifically degrades alpha-chain of fibrinogen (FGA). This is Zinc metalloproteinase-disintegrin-like ohanin from Ophiophagus hannah (King cobra).